We begin with the raw amino-acid sequence, 78 residues long: NAD(P)H-quinone oxidoreductase subunit O (78 aa).

The protein belongs to the complex I NdhO subunit family. In terms of assembly, NDH-1 can be composed of about 15 different subunits; different subcomplexes with different compositions have been identified which probably have different functions.

The protein resides in the cellular thylakoid membrane. It catalyses the reaction a plastoquinone + NADH + (n+1) H(+)(in) = a plastoquinol + NAD(+) + n H(+)(out). The enzyme catalyses a plastoquinone + NADPH + (n+1) H(+)(in) = a plastoquinol + NADP(+) + n H(+)(out). NDH-1 shuttles electrons from an unknown electron donor, via FMN and iron-sulfur (Fe-S) centers, to quinones in the respiratory and/or the photosynthetic chain. The immediate electron acceptor for the enzyme in this species is believed to be plastoquinone. Couples the redox reaction to proton translocation, and thus conserves the redox energy in a proton gradient. Cyanobacterial NDH-1 also plays a role in inorganic carbon-concentration. This is NAD(P)H-quinone oxidoreductase subunit O from Prochlorococcus marinus (strain MIT 9312).